A 323-amino-acid polypeptide reads, in one-letter code: Acetyl esterase (323 aa).

The Involved in the stabilization of the negatively charged intermediate by the formation of the oxyanion hole signature appears at 91 to 93; sequence HGG. Residues Ser165, Asp262, and His292 contribute to the active site.

It belongs to the 'GDXG' lipolytic enzyme family. As to quaternary structure, homodimer. Interacts with MalT and MelA.

The protein localises to the cytoplasm. Displays esterase activity towards short chain fatty esters (acyl chain length of up to 8 carbons). Able to hydrolyze triacetylglycerol (triacetin) and tributyrylglycerol (tributyrin), but not trioleylglycerol (triolein) or cholesterol oleate. Negatively regulates MalT activity by antagonizing maltotriose binding. Inhibits MelA galactosidase activity. The protein is Acetyl esterase of Salmonella paratyphi B (strain ATCC BAA-1250 / SPB7).